The chain runs to 281 residues: MPPAGSLTDEQLRFFDANGYLVLGSFSSAEEVRAMRDRMAELVDGFDGAGDVFSTKDHRQVKNDFFFKSAENISFFFEEKAFGDDGCLKQAKELSINKVGHALHELDPVFKKFSFGANVSSLFSSLRYKRPAVIQSMYIFKQPGIGGEVVPHQDNTFLYTDPPSCTGLWLALEDATKTNGCLWAIPGSHKNGLKRRMIRDEIDTHFDHPSPTYDLKEFVPLEVKSGDLVVIHGDLIHQSFENLSPVSRHALSLHVIDTEGCEWSKQNWLQRKIPPQPLYEN.

2-oxoglutarate is bound by residues K98, M137, 152-154 (HQD), and W169. Fe cation contacts are provided by H152 and D154. Position 237 (H237) interacts with Fe cation. 2-oxoglutarate is bound by residues S239 and R248.

This sequence belongs to the PhyH family. Fe cation serves as cofactor. L-ascorbate is required as a cofactor.

The catalysed reaction is phytanoyl-CoA + 2-oxoglutarate + O2 = 2-hydroxyphytanoyl-CoA + succinate + CO2. It participates in lipid metabolism; fatty acid metabolism. Converts phytanoyl-CoA to 2-hydroxyphytanoyl-CoA. This is Phytanoyl-CoA dioxygenase 1 from Oryza sativa subsp. japonica (Rice).